The sequence spans 76 residues: Small, acid-soluble spore protein Tlp (76 aa).

3 stretches are compositionally biased toward basic and acidic residues: residues M1–E15, D26–E38, and E46–S76. A disordered region spans residues M1–S76.

Belongs to the Tlp family.

It localises to the spore core. In Shouchella clausii (strain KSM-K16) (Alkalihalobacillus clausii), this protein is Small, acid-soluble spore protein Tlp.